The following is a 372-amino-acid chain: tRNA-specific 2-thiouridylase MnmA (372 aa).

ATP is bound by residues 16–23 (GMSGGVDS) and Met42. Residues 102-104 (NPD) form an interaction with target base in tRNA region. Catalysis depends on Cys107, which acts as the Nucleophile. Cys107 and Cys205 form a disulfide bridge. Gly132 contributes to the ATP binding site. Residues 155–157 (KDQ) are interaction with tRNA. Cys205 functions as the Cysteine persulfide intermediate in the catalytic mechanism. Residues 317–318 (RY) form an interaction with tRNA region.

The protein belongs to the MnmA/TRMU family.

It is found in the cytoplasm. It carries out the reaction S-sulfanyl-L-cysteinyl-[protein] + uridine(34) in tRNA + AH2 + ATP = 2-thiouridine(34) in tRNA + L-cysteinyl-[protein] + A + AMP + diphosphate + H(+). Catalyzes the 2-thiolation of uridine at the wobble position (U34) of tRNA, leading to the formation of s(2)U34. In Shewanella denitrificans (strain OS217 / ATCC BAA-1090 / DSM 15013), this protein is tRNA-specific 2-thiouridylase MnmA.